Consider the following 495-residue polypeptide: Lysine--tRNA ligase (495 aa).

The Mg(2+) site is built by Glu-406 and Glu-413.

It belongs to the class-II aminoacyl-tRNA synthetase family. Homodimer. Requires Mg(2+) as cofactor.

It localises to the cytoplasm. The enzyme catalyses tRNA(Lys) + L-lysine + ATP = L-lysyl-tRNA(Lys) + AMP + diphosphate. In Staphylococcus aureus, this protein is Lysine--tRNA ligase (lysS).